The sequence spans 446 residues: N-succinylarginine dihydrolase (446 aa).

Residues 19-28, asparagine 110, and 137-138 contribute to the substrate site; these read AGLSFGNVAS and HR. Glutamate 174 is a catalytic residue. Arginine 213 lines the substrate pocket. Residue histidine 249 is part of the active site. 2 residues coordinate substrate: aspartate 251 and asparagine 364. The active-site Nucleophile is cysteine 370.

Belongs to the succinylarginine dihydrolase family. In terms of assembly, homodimer.

The catalysed reaction is N(2)-succinyl-L-arginine + 2 H2O + 2 H(+) = N(2)-succinyl-L-ornithine + 2 NH4(+) + CO2. It participates in amino-acid degradation; L-arginine degradation via AST pathway; L-glutamate and succinate from L-arginine: step 2/5. Catalyzes the hydrolysis of N(2)-succinylarginine into N(2)-succinylornithine, ammonia and CO(2). This chain is N-succinylarginine dihydrolase, found in Burkholderia ambifaria (strain ATCC BAA-244 / DSM 16087 / CCUG 44356 / LMG 19182 / AMMD) (Burkholderia cepacia (strain AMMD)).